We begin with the raw amino-acid sequence, 1115 residues long: Tbc2 translation factor, chloroplastic (1115 aa).

2 stretches are compositionally biased toward low complexity: residues 69–87 (TASV…QLSS) and 163–175 (RRAG…SGRA). 2 disordered regions span residues 69–90 (TASV…SKAL) and 163–210 (RRAG…SSSS). A compositionally biased stretch (gly residues) spans 176–186 (RGWGSGPGRNG). Over residues 187–210 (SGSSSVSVNGSGSSSNGSSSSSSS) the composition is skewed to low complexity. 9 consecutive repeat copies span residues 483–521 (LVLE…WVEA), 607–645 (LDLT…WMQA), 685–723 (LAAT…WVGA), 724–763 (LLEE…AARL), 764–803 (MWRS…TQLC), 804–842 (LQAA…WLTR), 843–880 (MLLS…WLRR), 990–1029 (PAAH…QAAW), and 1030–1068 (WAAS…WLQA). The interval 483-1068 (LVLELSRARL…LRPPPEWLQA (586 aa)) is 9 X 38 AA approximate repeats.

Part of a 400 kDa complex which is not stably associated with RNA.

The protein resides in the plastid. The protein localises to the chloroplast stroma. Required for expression of the chloroplast encoded psbC mRNA, most likely for translation initiation. Interacts with the 5'-UTR of psbC. This chain is Tbc2 translation factor, chloroplastic (TBC2), found in Chlamydomonas reinhardtii (Chlamydomonas smithii).